We begin with the raw amino-acid sequence, 232 residues long: Octanoyltransferase (232 aa).

In terms of domain architecture, BPL/LPL catalytic spans 44–219 (EHTGDELWVV…QLARQFGLVL (176 aa)). Substrate contacts are provided by residues 83 to 90 (RGGQVTYH), 150 to 152 (ALG), and 163 to 165 (GLS). C181 functions as the Acyl-thioester intermediate in the catalytic mechanism.

This sequence belongs to the LipB family.

The protein resides in the cytoplasm. It catalyses the reaction octanoyl-[ACP] + L-lysyl-[protein] = N(6)-octanoyl-L-lysyl-[protein] + holo-[ACP] + H(+). It functions in the pathway protein modification; protein lipoylation via endogenous pathway; protein N(6)-(lipoyl)lysine from octanoyl-[acyl-carrier-protein]: step 1/2. Functionally, catalyzes the transfer of endogenously produced octanoic acid from octanoyl-acyl-carrier-protein onto the lipoyl domains of lipoate-dependent enzymes. Lipoyl-ACP can also act as a substrate although octanoyl-ACP is likely to be the physiological substrate. The protein is Octanoyltransferase of Xanthomonas campestris pv. campestris (strain B100).